The chain runs to 75 residues: Antimicrobial peptide ctriporin (75 aa).

The signal sequence occupies residues 1 to 22; the sequence is MDSKYLFVFLIFNVIVIDLCQG. Residue Lys-41 is modified to Lysine amide. A propeptide spanning residues 47–75 is cleaved from the precursor; that stretch reads ELGSQYDYLQDFRKRELDLDDLLSKFPDY.

The protein belongs to the non-disulfide-bridged peptide (NDBP) superfamily. Short antimicrobial peptide (group 4) family. In terms of tissue distribution, expressed by the venom gland.

It is found in the secreted. The protein localises to the target cell membrane. Its function is as follows. Antimicrobial peptide that acts by breaking the cell wall. Is active against Gram-positive bacteria, fungi and antibiotic-resistant pathogens: S.aureus (MIC=5 ug/ml), M.luteus (MIC=5 ug/ml), B.thuringiensis (MIC=10 ug/ml), B.subtilis (MIC=10 ug/ml), C.albicans (MIC=20 ug/ml), methicillin-resistant S.aureus (MIC=5-10 ug/ml), and penicillin-resistant S.epidermidis (MIC=10 ug/ml). Also shows potent activity against antibiotic-sensitive and -resistant Acinetobacter baumannii (MIC=10-20 uM). Shows cytolytic activity against human erythrocytes. In vivo, is efficient in curing staphylococcal skin infection in mice, when externally applied. In Chaerilus tricostatus (Scorpion), this protein is Antimicrobial peptide ctriporin.